We begin with the raw amino-acid sequence, 324 residues long: Adenine deaminase (324 aa).

Residues His-11, His-13, and His-189 each contribute to the Zn(2+) site. Glu-192 functions as the Proton donor in the catalytic mechanism. Asp-270 contacts Zn(2+). Asp-271 lines the substrate pocket.

It belongs to the metallo-dependent hydrolases superfamily. Adenosine and AMP deaminases family. Adenine deaminase type 2 subfamily. Zn(2+) is required as a cofactor.

The enzyme catalyses adenine + H2O + H(+) = hypoxanthine + NH4(+). Its function is as follows. Catalyzes the hydrolytic deamination of adenine to hypoxanthine. Plays an important role in the purine salvage pathway and in nitrogen catabolism. The sequence is that of Adenine deaminase from Sinorhizobium medicae (strain WSM419) (Ensifer medicae).